The following is a 305-amino-acid chain: Ornithine carbamoyltransferase (305 aa).

Residues 52–55, Gln-79, Arg-103, and 130–133 each bind carbamoyl phosphate; these read STRT and HPLQ. L-ornithine contacts are provided by residues Asn-162, Asp-224, and 228–229; that span reads SM. Residues 264-265 and Arg-292 contribute to the carbamoyl phosphate site; that span reads CL.

It belongs to the aspartate/ornithine carbamoyltransferase superfamily. OTCase family.

It is found in the cytoplasm. The catalysed reaction is carbamoyl phosphate + L-ornithine = L-citrulline + phosphate + H(+). Its pathway is amino-acid biosynthesis; L-arginine biosynthesis; L-arginine from L-ornithine and carbamoyl phosphate: step 1/3. Reversibly catalyzes the transfer of the carbamoyl group from carbamoyl phosphate (CP) to the N(epsilon) atom of ornithine (ORN) to produce L-citrulline. The protein is Ornithine carbamoyltransferase of Pyrobaculum aerophilum (strain ATCC 51768 / DSM 7523 / JCM 9630 / CIP 104966 / NBRC 100827 / IM2).